Reading from the N-terminus, the 200-residue chain is MKVLLLVLGAALCQNADANPTWANEAKLGSYQDAWKSLQQDQNKRYYLAQATQTTDGVWGEEFTCVSVTAEKIGKKKLNATILYKNKHLTDLKESHETITVWKAYDYTTENGIKYETQGTRTQTFEDVFVFSDYKNCDVIFVPKERGSDEGDYELWVSEDKIDKIPDCCKFTMAYFAQQQEKTVRNVYTDSSCKPAPAQN.

Residues 1–18 (MKVLLLVLGAALCQNADA) form the signal peptide. Histamine contacts are provided by Ser-37, Asp-41, Asp-56, and Trp-59. 2 cysteine pairs are disulfide-bonded: Cys-65-Cys-193 and Cys-137-Cys-169. A glycan (N-linked (GlcNAc...) asparagine) is linked at Asn-79. Residues Glu-97, Tyr-115, Phe-125, Asp-138, Glu-154, and Trp-156 each coordinate histamine.

The protein belongs to the calycin superfamily. Histamine-binding salivary protein family. As to quaternary structure, homodimer; disulcde-linked. In terms of processing, N-glycosylated. Expressed in salivary glands.

It localises to the secreted. Functionally, salivary tick protein that acts by scavenging histamine at the wound site, outcompeting histamine receptors for histamine, thereby overcoming host inflammatory responses. Binds histamine with a high-affinity (Kd=1.2 nM). Contains two binding histamine sites (H and L), that appear to bind histamine with differing affinities. The sequence is that of Male-specific histamine-binding salivary protein from Rhipicephalus appendiculatus (Brown ear tick).